We begin with the raw amino-acid sequence, 180 residues long: UPF0227 protein Ent638_1623 (180 aa).

Belongs to the UPF0227 family.

This chain is UPF0227 protein Ent638_1623, found in Enterobacter sp. (strain 638).